Here is a 901-residue protein sequence, read N- to C-terminus: Protein translocase subunit SecA (901 aa).

ATP is bound by residues Gln87, 105–109 (GEGKT), and Asp512. Zn(2+) is bound by residues Cys885, Cys887, Cys896, and His897.

This sequence belongs to the SecA family. In terms of assembly, monomer and homodimer. Part of the essential Sec protein translocation apparatus which comprises SecA, SecYEG and auxiliary proteins SecDF-YajC and YidC. Requires Zn(2+) as cofactor.

Its subcellular location is the cell inner membrane. It is found in the cytoplasm. The enzyme catalyses ATP + H2O + cellular proteinSide 1 = ADP + phosphate + cellular proteinSide 2.. Functionally, part of the Sec protein translocase complex. Interacts with the SecYEG preprotein conducting channel. Has a central role in coupling the hydrolysis of ATP to the transfer of proteins into and across the cell membrane, serving both as a receptor for the preprotein-SecB complex and as an ATP-driven molecular motor driving the stepwise translocation of polypeptide chains across the membrane. The protein is Protein translocase subunit SecA of Salmonella paratyphi B (strain ATCC BAA-1250 / SPB7).